The following is a 396-amino-acid chain: MAKAKFERTKPHVNIGTIGHVDHGKTTTTAAITKVLADAFPDLNEASAFDQIDKAPEEKARGITINISHVEYQTEKRHYAHVDAPGHADYIKNMITGAAQMDGAILVVAATDGPMPQTREHVLLARQVGVPYILVALNKADMVDDDEILELVEMEVRELLAAQEFDEEAPVIPISALKALEGDPKWTQSILDLMAAVDESIPDPVRETDKPFLMPVEDVFTITGRGTVVTGRIERGSVNVNEEVEIVGIKETSTKTTVTGIEMFRKLLDSGQAGDNVGLLVRGIKREDVERGQVVVKPGTTTPHTEFEGQAYILSKDEGGRHTPFFNNYRPQFYFRTTDVTGVVTLPEGTEMVMPGDNTEMSVKLIQPVAMDEGLRFAIREGGRTVGAGKVAKIIK.

Residues 10–205 (KPHVNIGTIG…AVDESIPDPV (196 aa)) form the tr-type G domain. Residues 19 to 26 (GHVDHGKT) form a G1 region. A GTP-binding site is contributed by 19–26 (GHVDHGKT). Thr26 provides a ligand contact to Mg(2+). Residues 62–66 (GITIN) form a G2 region. The interval 83–86 (DAPG) is G3. GTP-binding positions include 83–87 (DAPGH) and 138–141 (NKAD). Residues 138–141 (NKAD) are G4. The interval 175–177 (SAL) is G5.

The protein belongs to the TRAFAC class translation factor GTPase superfamily. Classic translation factor GTPase family. EF-Tu/EF-1A subfamily. As to quaternary structure, monomer.

Its subcellular location is the cytoplasm. It carries out the reaction GTP + H2O = GDP + phosphate + H(+). Its function is as follows. GTP hydrolase that promotes the GTP-dependent binding of aminoacyl-tRNA to the A-site of ribosomes during protein biosynthesis. This Rhodococcus erythropolis (strain PR4 / NBRC 100887) protein is Elongation factor Tu.